Reading from the N-terminus, the 200-residue chain is Peptidyl-tRNA hydrolase (200 aa).

Tyrosine 23 serves as a coordination point for tRNA. Residue histidine 28 is the Proton acceptor of the active site. Residues phenylalanine 79, asparagine 81, and asparagine 127 each coordinate tRNA.

Belongs to the PTH family. As to quaternary structure, monomer.

Its subcellular location is the cytoplasm. It catalyses the reaction an N-acyl-L-alpha-aminoacyl-tRNA + H2O = an N-acyl-L-amino acid + a tRNA + H(+). In terms of biological role, hydrolyzes ribosome-free peptidyl-tRNAs (with 1 or more amino acids incorporated), which drop off the ribosome during protein synthesis, or as a result of ribosome stalling. Its function is as follows. Catalyzes the release of premature peptidyl moieties from peptidyl-tRNA molecules trapped in stalled 50S ribosomal subunits, and thus maintains levels of free tRNAs and 50S ribosomes. In Streptomyces coelicolor (strain ATCC BAA-471 / A3(2) / M145), this protein is Peptidyl-tRNA hydrolase.